Consider the following 120-residue polypeptide: NAD(P)H-quinone oxidoreductase subunit 3, chloroplastic (120 aa).

3 helical membrane-spanning segments follow: residues 9-29 (IFWA…XISG), 64-84 (MFAL…PWAM), and 88-108 (VLGV…IVGL).

This sequence belongs to the complex I subunit 3 family. In terms of assembly, NDH is composed of at least 16 different subunits, 5 of which are encoded in the nucleus.

It localises to the plastid. It is found in the chloroplast thylakoid membrane. It carries out the reaction a plastoquinone + NADH + (n+1) H(+)(in) = a plastoquinol + NAD(+) + n H(+)(out). It catalyses the reaction a plastoquinone + NADPH + (n+1) H(+)(in) = a plastoquinol + NADP(+) + n H(+)(out). In terms of biological role, NDH shuttles electrons from NAD(P)H:plastoquinone, via FMN and iron-sulfur (Fe-S) centers, to quinones in the photosynthetic chain and possibly in a chloroplast respiratory chain. The immediate electron acceptor for the enzyme in this species is believed to be plastoquinone. Couples the redox reaction to proton translocation, and thus conserves the redox energy in a proton gradient. The protein is NAD(P)H-quinone oxidoreductase subunit 3, chloroplastic of Eucalyptus globulus subsp. globulus (Tasmanian blue gum).